Consider the following 492-residue polypeptide: Trigger factor (492 aa).

Positions Glu-77–Glu-96 are disordered. The PPIase FKBP-type domain maps to Gly-169–Val-254. The tract at residues Glu-439 to Glu-492 is disordered.

This sequence belongs to the FKBP-type PPIase family. Tig subfamily.

It localises to the cytoplasm. It catalyses the reaction [protein]-peptidylproline (omega=180) = [protein]-peptidylproline (omega=0). Functionally, involved in protein export. Acts as a chaperone by maintaining the newly synthesized protein in an open conformation. Functions as a peptidyl-prolyl cis-trans isomerase. This Agrobacterium fabrum (strain C58 / ATCC 33970) (Agrobacterium tumefaciens (strain C58)) protein is Trigger factor.